Here is a 683-residue protein sequence, read N- to C-terminus: Cysteine-rich receptor-like protein kinase 28 (683 aa).

Positions 1–24 (MEHVRVIFFFFACVLKIVPFICLA) are cleaved as a signal peptide. Over 25–288 (QKDKYEFPPG…RTGKGKGGSK (264 aa)) the chain is Extracellular. Gnk2-homologous domains are found at residues 32–136 (PPGF…NMII) and 142–251 (TTPT…TWRF). N-linked (GlcNAc...) asparagine glycosylation is found at Asn-43, Asn-47, Asn-73, and Asn-153. The interval 263–283 (PAIQPADSPTSAARTERTGKG) is disordered. Residues 289–309 (VIVAIVIPIVFVALFAICLCL) traverse the membrane as a helical segment. The Cytoplasmic segment spans residues 310-683 (LLKWKKNKSV…DVTVSELSPR (374 aa)). One can recognise a Protein kinase domain in the interval 361–641 (FSPENELGRG…ALMLNSYSYT (281 aa)). ATP is bound by residues 367–375 (LGRGGFGSV) and Lys-389. Tyr-434 is subject to Phosphotyrosine. Asp-486 serves as the catalytic Proton acceptor. Ser-490 is subject to Phosphoserine. At Thr-528 the chain carries Phosphothreonine. Tyr-536 bears the Phosphotyrosine mark.

The protein belongs to the protein kinase superfamily. Ser/Thr protein kinase family. CRK subfamily.

Its subcellular location is the membrane. It carries out the reaction L-seryl-[protein] + ATP = O-phospho-L-seryl-[protein] + ADP + H(+). It catalyses the reaction L-threonyl-[protein] + ATP = O-phospho-L-threonyl-[protein] + ADP + H(+). This chain is Cysteine-rich receptor-like protein kinase 28 (CRK28), found in Arabidopsis thaliana (Mouse-ear cress).